The primary structure comprises 474 residues: 3-isopropylmalate dehydratase large subunit (474 aa).

[4Fe-4S] cluster contacts are provided by C355, C415, and C418.

The protein belongs to the aconitase/IPM isomerase family. LeuC type 1 subfamily. In terms of assembly, heterodimer of LeuC and LeuD. [4Fe-4S] cluster is required as a cofactor.

It carries out the reaction (2R,3S)-3-isopropylmalate = (2S)-2-isopropylmalate. It functions in the pathway amino-acid biosynthesis; L-leucine biosynthesis; L-leucine from 3-methyl-2-oxobutanoate: step 2/4. In terms of biological role, catalyzes the isomerization between 2-isopropylmalate and 3-isopropylmalate, via the formation of 2-isopropylmaleate. This is 3-isopropylmalate dehydratase large subunit from Shewanella sp. (strain MR-4).